The primary structure comprises 357 residues: 4-hydroxy-3-methylbut-2-en-1-yl diphosphate synthase (flavodoxin) (357 aa).

Residues Cys-264, Cys-267, Cys-299, and Glu-306 each coordinate [4Fe-4S] cluster.

Belongs to the IspG family. Requires [4Fe-4S] cluster as cofactor.

It catalyses the reaction (2E)-4-hydroxy-3-methylbut-2-enyl diphosphate + oxidized [flavodoxin] + H2O + 2 H(+) = 2-C-methyl-D-erythritol 2,4-cyclic diphosphate + reduced [flavodoxin]. Its pathway is isoprenoid biosynthesis; isopentenyl diphosphate biosynthesis via DXP pathway; isopentenyl diphosphate from 1-deoxy-D-xylulose 5-phosphate: step 5/6. Its function is as follows. Converts 2C-methyl-D-erythritol 2,4-cyclodiphosphate (ME-2,4cPP) into 1-hydroxy-2-methyl-2-(E)-butenyl 4-diphosphate. This chain is 4-hydroxy-3-methylbut-2-en-1-yl diphosphate synthase (flavodoxin), found in Campylobacter jejuni subsp. jejuni serotype O:23/36 (strain 81-176).